A 956-amino-acid chain; its full sequence is Phosphatidylinositol 4-kinase PIK1a (956 aa).

Positions 1–120 (MPVAPHELRD…QTVRKFINKL (120 aa)) constitute a PIK helical domain. The disordered stretch occupies residues 545-573 (SRDWAKSTPGSPVARSSQEDEKFYGNVSS). The region spanning 658–939 (EDWNEKKHRI…YLIEKSVGSM (282 aa)) is the PI3K/PI4K catalytic domain. Positions 664 to 670 (KHRIRKS) are G-loop. Residues 805–813 (QIKDRHNGN) are catalytic loop. The segment at 824–848 (HIDFGFLLSNSPGSVGFEAAPFKLT) is activation loop.

Belongs to the PI3/PI4-kinase family. Type III PI4K subfamily.

It is found in the nucleus. It carries out the reaction a 1,2-diacyl-sn-glycero-3-phospho-(1D-myo-inositol) + ATP = a 1,2-diacyl-sn-glycero-3-phospho-(1D-myo-inositol 4-phosphate) + ADP + H(+). In terms of biological role, acts on phosphatidylinositol (PI) in the first committed step in the production of the second messenger inositol 1,4,5,-trisphosphate. The polypeptide is Phosphatidylinositol 4-kinase PIK1a (PIKA) (Candida albicans (strain SC5314 / ATCC MYA-2876) (Yeast)).